The chain runs to 150 residues: Large ribosomal subunit protein bL9 (150 aa).

It belongs to the bacterial ribosomal protein bL9 family.

Functionally, binds to the 23S rRNA. The polypeptide is Large ribosomal subunit protein bL9 (Methylibium petroleiphilum (strain ATCC BAA-1232 / LMG 22953 / PM1)).